Reading from the N-terminus, the 187-residue chain is Elongation factor P (187 aa).

It belongs to the elongation factor P family.

It is found in the cytoplasm. Its pathway is protein biosynthesis; polypeptide chain elongation. In terms of biological role, involved in peptide bond synthesis. Stimulates efficient translation and peptide-bond synthesis on native or reconstituted 70S ribosomes in vitro. Probably functions indirectly by altering the affinity of the ribosome for aminoacyl-tRNA, thus increasing their reactivity as acceptors for peptidyl transferase. This Corynebacterium aurimucosum (strain ATCC 700975 / DSM 44827 / CIP 107346 / CN-1) (Corynebacterium nigricans) protein is Elongation factor P.